A 122-amino-acid polypeptide reads, in one-letter code: NLWQFGKLIMKIAGESGVFKYLSYGCYCGLGGQGQPTDATDRCCFVHDCCYGKVTGCDPKIDSYTYSKENGDVVCGGDDPCKKQICECDRVAATCFRDNKDTYDIKYWFYGAKNCQEESEPC.

7 disulfide bridges follow: cysteine 26–cysteine 115, cysteine 28–cysteine 44, cysteine 43–cysteine 95, cysteine 49–cysteine 122, cysteine 50–cysteine 88, cysteine 57–cysteine 81, and cysteine 75–cysteine 86. Ca(2+) is bound by residues tyrosine 27, glycine 29, and glycine 31. Histidine 47 is a catalytic residue. Residue aspartate 48 participates in Ca(2+) binding. Aspartate 89 is an active-site residue. The Antiplatelet activity signature appears at 105 to 117 (IKYWFYGAKNCQE).

It belongs to the phospholipase A2 family. Group II subfamily. D49 sub-subfamily. The cofactor is Ca(2+). As to expression, expressed by the venom gland.

The protein localises to the secreted. The enzyme catalyses a 1,2-diacyl-sn-glycero-3-phosphocholine + H2O = a 1-acyl-sn-glycero-3-phosphocholine + a fatty acid + H(+). With respect to regulation, inhibited by EDTA and p-bromophenacyl bromide (BPB). Its function is as follows. Snake venom phospholipase A2 (PLA2) that inhibits collagen/ADP-induced platelet aggregation, and induces hypotension in rats (activity abolished in the presence of p-bromophenacyl bromide). PLA2 catalyzes the calcium-dependent hydrolysis of the 2-acyl groups in 3-sn-phosphoglycerides. This Bothrops pirajai (Piraja's lancehead) protein is Acidic phospholipase A2 BpirPLA2-I.